A 565-amino-acid chain; its full sequence is NAD-dependent malic enzyme (565 aa).

The Proton donor role is filled by Y104. Residue R157 coordinates NAD(+). The active-site Proton acceptor is K175. 3 residues coordinate a divalent metal cation: E246, D247, and D270. D270 and N418 together coordinate NAD(+).

It belongs to the malic enzymes family. As to quaternary structure, homotetramer. Mg(2+) is required as a cofactor. It depends on Mn(2+) as a cofactor.

It carries out the reaction (S)-malate + NAD(+) = pyruvate + CO2 + NADH. It catalyses the reaction oxaloacetate + H(+) = pyruvate + CO2. The protein is NAD-dependent malic enzyme of Salmonella choleraesuis (strain SC-B67).